The chain runs to 533 residues: MEKGTRQRNNTAKNHPDRGSDTSPEAEASSGGGGVALKKEIGLVSACGIIVGNIIGSGIFVSPKGVLENAGSVGLALIVWIVTGVITAVGALCYAELGVTIPKSGGDYSYVKDIFGGLAGFLRLWIAVLVIYPTNQAVIALTFSNYVLQPLFPTCFPPESGLRLLAAICLLLLTWVNCSSVRWATRVQDIFTAGKLLALALIIIMGVVQICKGEFFWLEPKNAFENFQEPDIGLVALAFLQGSFAYGGWNFLNYVTEELVDPYKNLPRAIFISIPLVTFVYVFANIAYVTAMSPQELLASNAVAVTFGEKLLGVMAWIMPISVALSTFGGVNGSLFTSSRLFFAGAREGHLPSVLAMIHVKRCTPIPALLFTCLSTLLMLVTSDMYTLINYVGFINYLFYGVTVAGQIVLRWKKPDIPRPIKISLLFPIIYLLFWAFLLIFSLWSEPVVCGIGLAIMLTGVPVYFLGVYWQHKPKCFNDFIESLTLVSQKMCVVVYPQEGDSGTEETIDDVEEQHKPIFQPTPVKDPDSEEQP.

The interval 1–33 (MEKGTRQRNNTAKNHPDRGSDTSPEAEASSGGG) is disordered. Residues 1–45 (MEKGTRQRNNTAKNHPDRGSDTSPEAEASSGGGGVALKKEIGLVS) lie on the Cytoplasmic side of the membrane. 4 positions are modified to phosphoserine: serine 20, serine 23, serine 29, and serine 30. Residues 46 to 66 (ACGIIVGNIIGSGIFVSPKGV) traverse the membrane as a helical segment. Isoleucine 54 lines the L-leucine pocket. Residues 67–74 (LENAGSVG) lie on the Extracellular side of the membrane. Residues 75 to 96 (LALIVWIVTGVITAVGALCYAE) form a helical membrane-spanning segment. The Cytoplasmic portion of the chain corresponds to 97 to 117 (LGVTIPKSGGDYSYVKDIFGG). Residues 118–150 (LAGFLRLWIAVLVIYPTNQAVIALTFSNYVLQP) form a helical membrane-spanning segment. Asparagine 135 serves as a coordination point for L-tryptophan. Topologically, residues 151–158 (LFPTCFPP) are extracellular. The helical transmembrane segment at 159 to 179 (ESGLRLLAAICLLLLTWVNCS) threads the bilayer. At 180–182 (SVR) the chain is on the cytoplasmic side. The chain crosses the membrane as a helical span at residues 183 to 211 (WATRVQDIFTAGKLLALALIIIMGVVQIC). Topologically, residues 212–231 (KGEFFWLEPKNAFENFQEPD) are extracellular. A helical transmembrane segment spans residues 232-253 (IGLVALAFLQGSFAYGGWNFLN). L-leucine is bound at residue glycine 247. The Cytoplasmic segment spans residues 254-266 (YVTEELVDPYKNL). A helical membrane pass occupies residues 267–288 (PRAIFISIPLVTFVYVFANIAY). The Extracellular portion of the chain corresponds to 289–313 (VTAMSPQELLASNAVAVTFGEKLLG). The chain crosses the membrane as a helical span at residues 314–339 (VMAWIMPISVALSTFGGVNGSLFTSS). The Cytoplasmic portion of the chain corresponds to 340–365 (RLFFAGAREGHLPSVLAMIHVKRCTP). The helical transmembrane segment at 366-383 (IPALLFTCLSTLLMLVTS) threads the bilayer. At 384-387 (DMYT) the chain is on the extracellular side. The chain crosses the membrane as a helical span at residues 388–409 (LINYVGFINYLFYGVTVAGQIV). L-tryptophan is bound at residue asparagine 396. Residues 410–424 (LRWKKPDIPRPIKIS) lie on the Cytoplasmic side of the membrane. The next 2 membrane-spanning stretches (helical) occupy residues 425–447 (LLFPIIYLLFWAFLLIFSLWSEP) and 448–467 (VVCGIGLAIMLTGVPVYFLG). The Cytoplasmic portion of the chain corresponds to 468–533 (VYWQHKPKCF…VKDPDSEEQP (66 aa)). The tract at residues 500–533 (GDSGTEETIDDVEEQHKPIFQPTPVKDPDSEEQP) is disordered. A compositionally biased stretch (acidic residues) spans 502–512 (SGTEETIDDVE). Serine 529 is subject to Phosphoserine.

This sequence belongs to the amino acid-polyamine-organocation (APC) superfamily. L-type amino acid transporter (LAT) (TC 2.A.3.8) family. As to quaternary structure, disulfide-linked heterodimer composed of the catalytic light chain subunit SLC7A8 and the heavy chain subunit SLC3A2. SLC3A2 acts as a chaperone for correct plasma membrane trafficking and stabilization of SLC7A8 and modulates the substrate affinity and specificity of SLC7A8. ICAM-1 associates with the heterodimer SLC3A2/SLC7A8; facilitates leucine uptake. As to expression, expression is seen in jejunum mucosa and the epithelial cells of the jejunum, ileum and colon, as well as in kidney, placenta, brain, testis and skeletal muscle. Expressed in retina, inner blood-retinal barrier of retina, retinal vascular endothelial cells. Also expressed in the intestinal epithelial cell line IEC-6 and in the retinal capillary endothelial cell line TR-iBRB2.

The protein resides in the cell membrane. Its subcellular location is the basolateral cell membrane. The enzyme catalyses L-dopa(out) + L-phenylalanine(in) = L-dopa(in) + L-phenylalanine(out). It catalyses the reaction 3,3'-diiodo-L-thyronine(out) = 3,3'-diiodo-L-thyronine(in). The catalysed reaction is L-histidine(in) + L-phenylalanine(out) = L-histidine(out) + L-phenylalanine(in). It carries out the reaction L-tryptophan(in) + L-phenylalanine(out) = L-tryptophan(out) + L-phenylalanine(in). The enzyme catalyses L-isoleucine(in) + L-phenylalanine(out) = L-isoleucine(out) + L-phenylalanine(in). It catalyses the reaction L-valine(in) + L-phenylalanine(out) = L-valine(out) + L-phenylalanine(in). The catalysed reaction is L-leucine(in) + L-phenylalanine(out) = L-leucine(out) + L-phenylalanine(in). It carries out the reaction L-glutamine(in) + L-phenylalanine(out) = L-glutamine(out) + L-phenylalanine(in). The enzyme catalyses L-cysteine(in) + L-phenylalanine(out) = L-cysteine(out) + L-phenylalanine(in). It catalyses the reaction L-phenylalanine(out) + L-methionine(in) = L-phenylalanine(in) + L-methionine(out). The catalysed reaction is L-leucine(out) + L-methionine(in) = L-leucine(in) + L-methionine(out). It carries out the reaction L-cysteine(out) + L-methionine(in) = L-cysteine(in) + L-methionine(out). The enzyme catalyses S-methylmercury-L-cysteine(out) + L-methionine(in) = S-methylmercury-L-cysteine(in) + L-methionine(out). It catalyses the reaction S-methylmercury-L-cysteine(in) + L-leucine(out) = S-methylmercury-L-cysteine(out) + L-leucine(in). The catalysed reaction is S-methylmercury-L-cysteine(in) + L-phenylalanine(out) = S-methylmercury-L-cysteine(out) + L-phenylalanine(in). It carries out the reaction L-phenylalanine(out) + L-serine(in) = L-phenylalanine(in) + L-serine(out). The enzyme catalyses L-phenylalanine(out) + glycine(in) = L-phenylalanine(in) + glycine(out). It catalyses the reaction L-phenylalanine(out) + L-alanine(in) = L-phenylalanine(in) + L-alanine(out). The catalysed reaction is 3,3',5-triiodo-L-thyronine(out) = 3,3',5-triiodo-L-thyronine(in). With respect to regulation, leucine transport activity is inhibited by 2-amino-bicyclo-(2,2,1)-heptane-2-carboxylate (BCH), glycine, L-isomers of the neutral amino acids and histidine. In terms of biological role, associates with SLC3A2 to form a functional heterodimeric complex that translocates small and large neutral amino acids with broad specificity and a stoichiometry of 1:1. Functions as amino acid antiporter mediating the influx of extracellular essential amino acids mainly in exchange with the efflux of highly concentrated intracellular amino acids. Has relatively symmetrical selectivities but strongly asymmetrical substrate affinities at both the intracellular and extracellular sides of the transporter. This asymmetry allows SLC7A8 to regulate intracellular amino acid pools (mM concentrations) by exchange with external amino acids (uM concentration range), equilibrating the relative concentrations of different amino acids across the plasma membrane instead of mediating their net uptake. May play an essential role in the reabsorption of neutral amino acids from the epithelial cells to the bloodstream in the kidney. Involved in the uptake of methylmercury (MeHg) when administered as the L-cysteine or D,L-homocysteine complexes, and hence plays a role in metal ion homeostasis and toxicity. Involved in the cellular activity of small molecular weight nitrosothiols, via the stereoselective transport of L-nitrosocysteine (L-CNSO) across the transmembrane. Imports the thyroid hormone diiodothyronine (T2) and to a smaller extent triiodothyronine (T3) but not rT 3 or thyroxine (T4). Mediates the uptake of L-DOPA. May participate in auditory function. This chain is Large neutral amino acids transporter small subunit 2 (Slc7a8), found in Rattus norvegicus (Rat).